Reading from the N-terminus, the 358-residue chain is Methylthioribose-1-phosphate isomerase (358 aa).

Substrate contacts are provided by residues 54–56 (RGA), R96, and Q205. The active-site Proton donor is the D246. Position 256–257 (256–257 (NK)) interacts with substrate.

It belongs to the eIF-2B alpha/beta/delta subunits family. MtnA subfamily.

The catalysed reaction is 5-(methylsulfanyl)-alpha-D-ribose 1-phosphate = 5-(methylsulfanyl)-D-ribulose 1-phosphate. It functions in the pathway amino-acid biosynthesis; L-methionine biosynthesis via salvage pathway; L-methionine from S-methyl-5-thio-alpha-D-ribose 1-phosphate: step 1/6. Functionally, catalyzes the interconversion of methylthioribose-1-phosphate (MTR-1-P) into methylthioribulose-1-phosphate (MTRu-1-P). In Pseudomonas fluorescens (strain Pf0-1), this protein is Methylthioribose-1-phosphate isomerase.